We begin with the raw amino-acid sequence, 451 residues long: BSD domain-containing protein 1 (451 aa).

Positions tryptophan 146–glutamate 198 constitute a BSD domain. Disordered regions lie at residues serine 252–threonine 296 and leucine 309–methionine 424. The segment covering proline 275–valine 295 has biased composition (low complexity). Over residues leucine 309–aspartate 320 the composition is skewed to polar residues. Over residues lysine 365–valine 388 the composition is skewed to basic and acidic residues. Over residues asparagine 392–aspartate 411 the composition is skewed to polar residues. Acidic residues predominate over residues isoleucine 412–methionine 424.

This chain is BSD domain-containing protein 1 (BSDC1), found in Gallus gallus (Chicken).